The sequence spans 351 residues: Methylthioribose-1-phosphate isomerase (351 aa).

Residues 53-55 (RGA), R96, and Q205 contribute to the substrate site. The Proton donor role is filled by D246. A substrate-binding site is contributed by 256 to 257 (NK).

It belongs to the eIF-2B alpha/beta/delta subunits family. MtnA subfamily.

The enzyme catalyses 5-(methylsulfanyl)-alpha-D-ribose 1-phosphate = 5-(methylsulfanyl)-D-ribulose 1-phosphate. It participates in amino-acid biosynthesis; L-methionine biosynthesis via salvage pathway; L-methionine from S-methyl-5-thio-alpha-D-ribose 1-phosphate: step 1/6. Catalyzes the interconversion of methylthioribose-1-phosphate (MTR-1-P) into methylthioribulose-1-phosphate (MTRu-1-P). The polypeptide is Methylthioribose-1-phosphate isomerase (Synechocystis sp. (strain ATCC 27184 / PCC 6803 / Kazusa)).